The following is a 267-amino-acid chain: MAASTMALSSSTFAGKTVKLAPSSSEITGNGRITMRKTAAKPKPASSGSPWXXXXXXXXXXXXXXXXXXXXXXXXXXXXXXXXXXXXXXXXXXXXXXXXXXXXXXXXXXXXXXXXXXXXXXXXXXXXXXXXXXXXXXXXXXXXXXXXXXXXSLVHAQSILAIWACQVVLMGAVEGYRIAGGPLGEVVDPLYPGGSFDPLGLAEDPEAFAELKVKEIKNGRLAMFSMFGFFVQAIVTGKGPLENLADHIADPVNNNAWAFATNFVPGK.

A chloroplast-targeting transit peptide spans 1–34 (MAASTMALSSSTFAGKTVKLAPSSSEITGNGRIT). The helical transmembrane segment at 153 to 173 (LVHAQSILAIWACQVVLMGAV) threads the bilayer. Chlorophyll b is bound by residues valine 154, serine 158, glutamine 166, glutamate 174, arginine 177, and leucine 183. Residues lysine 214, glutamate 215, asparagine 218, arginine 220, glutamine 232, histidine 247, and alanine 256 each contribute to the chlorophyll a site. The helical transmembrane segment at 221–241 (LAMFSMFGFFVQAIVTGKGPL) threads the bilayer. Phenylalanine 263 serves as a coordination point for chlorophyll b.

It belongs to the light-harvesting chlorophyll a/b-binding (LHC) protein family. The LHC complex consists of chlorophyll a-b binding proteins. It depends on Binds at least 14 chlorophylls (8 Chl-a and 6 Chl-b) and carotenoids such as lutein and neoxanthin. as a cofactor. Photoregulated by reversible phosphorylation of its threonine residues.

It is found in the plastid. Its subcellular location is the chloroplast thylakoid membrane. In terms of biological role, the light-harvesting complex (LHC) functions as a light receptor, it captures and delivers excitation energy to photosystems with which it is closely associated. This is Chlorophyll a-b binding protein 3A, chloroplastic (CAB3A) from Solanum lycopersicum (Tomato).